Reading from the N-terminus, the 76-residue chain is uncharacterized protein (76 aa).

Positions 27-76 (SINNGEGSSVVHRDATAPPTPPVVPTSTLQVPGLQRARTPEPNDPRVANL) are disordered.

This is an uncharacterized protein from Caenorhabditis elegans.